Consider the following 506-residue polypeptide: Serine/threonine-protein kinase RIO1 (506 aa).

The tract at residues 22 to 52 (TASSSSDDEPEQAVVKQEKLEAGEQIEEQYD) is disordered. The Protein kinase domain occupies 142-506 (LNIDGCISTG…KKRAHRQHMK (365 aa)). Residues 148-156 (ISTGKEANV), lysine 169, and leucine 241 each bind ATP. Aspartate 285 functions as the Proton acceptor in the catalytic mechanism. Asparagine 290 is an ATP binding site. Mg(2+) contacts are provided by asparagine 290 and aspartate 302. Aspartate 302 serves as the catalytic 4-aspartylphosphate intermediate. A disordered region spans residues 418-506 (GDGFGEEHDD…KKRAHRQHMK (89 aa)). Over residues 424 to 435 (EHDDSDDNDDEE) the composition is skewed to acidic residues. Residues 454–490 (EKERKIAMHTRNREETAEERKERKAAVKEEKREQRKE) show a composition bias toward basic and acidic residues. Positions 491 to 506 (KIPKHLKKRAHRQHMK) are enriched in basic residues.

It belongs to the protein kinase superfamily. RIO-type Ser/Thr kinase family. Mg(2+) is required as a cofactor. Expressed in vulva and uterine cells, uterine seam cells (utse), spermatheca and in the nervous system including chemosensory neurons in the head, nerve ring neurons (RID/RIF), inhibitory motor neurons (DA/DD/VA/VD), mechanosensory neurons (ALML/PLML) and tail sensory neurons (DVA//PDA). Also expressed in intestine and pharynx (procorpus) and rectal valve and gland.

It localises to the cytoplasm. The catalysed reaction is L-seryl-[protein] + ATP = O-phospho-L-seryl-[protein] + ADP + H(+). It carries out the reaction L-threonyl-[protein] + ATP = O-phospho-L-threonyl-[protein] + ADP + H(+). In terms of biological role, involved in the final steps of cytoplasmic maturation of the 40S ribosomal subunit. Despite the protein kinase domain is proposed to act predominantly as an ATPase. The catalytic activity regulates its dynamic association with the 40S subunit. Plays a role in oogenesis by regulating germ cell proliferation, progression through diplotene and diakinesis stages and oocyte maturation. Regulates germline development probably by regulating the phosphorylation of mpk-1. Involved in larval development. The sequence is that of Serine/threonine-protein kinase RIO1 from Caenorhabditis elegans.